Reading from the N-terminus, the 138-residue chain is Cofilin (138 aa).

In terms of domain architecture, ADF-H spans 2–136 (SSGVQPTQEC…TKDALFEKAT (135 aa)).

Belongs to the actin-binding proteins ADF family.

Its subcellular location is the cytoplasm. It localises to the cytoskeleton. The protein resides in the nucleus matrix. Functionally, controls reversibly actin polymerization and depolymerization in a pH-sensitive manner. It has the ability to bind G- and F-actin in a 1:1 ratio of cofilin to actin. Binding to F-actin is regulated by tropomyosin. It is the major component of intranuclear and cytoplasmic actin rods. Required for accumulation of actin at the cell division site via depolymerizing actin at the cell ends. In association with myosin II has a role in the assembly of the contractile ring via severing actin filaments. Involved in the maintenance of the contractile ring once formed. In association with profilin and capping protein, has a role in the mitotic reorganization of the actin cytoskeleton. The sequence is that of Cofilin (COF1) from Cryptococcus neoformans var. neoformans serotype D (strain B-3501A) (Filobasidiella neoformans).